Consider the following 172-residue polypeptide: Large ribosomal subunit protein uL10 (172 aa).

Belongs to the universal ribosomal protein uL10 family. In terms of assembly, part of the ribosomal stalk of the 50S ribosomal subunit. The N-terminus interacts with L11 and the large rRNA to form the base of the stalk. The C-terminus forms an elongated spine to which L12 dimers bind in a sequential fashion forming a multimeric L10(L12)X complex.

In terms of biological role, forms part of the ribosomal stalk, playing a central role in the interaction of the ribosome with GTP-bound translation factors. The polypeptide is Large ribosomal subunit protein uL10 (Chlorobium phaeovibrioides (strain DSM 265 / 1930) (Prosthecochloris vibrioformis (strain DSM 265))).